The following is a 120-amino-acid chain: Large ribosomal subunit protein bL19 (120 aa).

This sequence belongs to the bacterial ribosomal protein bL19 family.

Functionally, this protein is located at the 30S-50S ribosomal subunit interface and may play a role in the structure and function of the aminoacyl-tRNA binding site. The protein is Large ribosomal subunit protein bL19 of Picosynechococcus sp. (strain ATCC 27264 / PCC 7002 / PR-6) (Agmenellum quadruplicatum).